Reading from the N-terminus, the 110-residue chain is Phosphoribosyl-ATP pyrophosphatase (110 aa).

This sequence belongs to the PRA-PH family.

It localises to the cytoplasm. The enzyme catalyses 1-(5-phospho-beta-D-ribosyl)-ATP + H2O = 1-(5-phospho-beta-D-ribosyl)-5'-AMP + diphosphate + H(+). It functions in the pathway amino-acid biosynthesis; L-histidine biosynthesis; L-histidine from 5-phospho-alpha-D-ribose 1-diphosphate: step 2/9. This is Phosphoribosyl-ATP pyrophosphatase from Clostridium botulinum (strain ATCC 19397 / Type A).